Here is a 409-residue protein sequence, read N- to C-terminus: Phosphoglycerate kinase (409 aa).

Substrate contacts are provided by residues 23-25 (DIN), 63-66 (HQSR), Arg-120, and Arg-160. Residues Glu-333 and 359–362 (GGHL) contribute to the ATP site.

The protein belongs to the phosphoglycerate kinase family. Monomer.

It localises to the cytoplasm. It carries out the reaction (2R)-3-phosphoglycerate + ATP = (2R)-3-phospho-glyceroyl phosphate + ADP. The protein operates within carbohydrate degradation; glycolysis; pyruvate from D-glyceraldehyde 3-phosphate: step 2/5. This is Phosphoglycerate kinase (pgk) from Methanobacterium bryantii.